Consider the following 571-residue polypeptide: MTIEALADVVRLHPELALFAAIVFGHFIGKIEIRKVSLGTVVGTLIAGMILGLLFEPEIPDLLKWAFFDLFLFAVGYSAGPQFFASLKREALPQMALAVVVSCTGLAAAIAMVALFRFDPGLSAGLVSGSMTQSAALGSALSAIAAMDVDEATRALLTAHAPLADATTYIFGEVGLILFVTVVAPRLLKVDLRQVAREAEAELQARTDEDDAALWDQAPLSLRTYRLENAELDQRTVHEFERRYAAGRLTVTGIRRGDQLLRDVGADARLALGDIVLVASRRAGVVGAALEVGTEVDDQELLSEPMVRASIVLTRREMAGKTLGELARGAARGLFLDSLHRGESTLPRAMGTRVQRGDVFKLTGSRAAIATAARNLGFIEHDQGRTDLVYLAGGVVVGILFGLLQVRLTGVPLGLGTSGGVLVVGLVAGWLYSRYPVVGHIPEPALRLLSDVGLIVFIAAIGLAAGPHAVQAIHEGGIALFAKLVGAGVVVTLAGPIAGLLLGHYVLKLPPVALLPGIAGAQTTVATLNALKERGGSDVYAIGFTVPFAVSNVLITLWGPVIVACAVALSR.

The next 5 helical transmembrane spans lie at 10–29 (VRLH…HFIG), 36–55 (VSLG…GLLF), 65–87 (WAFF…FASL), 96–118 (ALAV…LFRF), and 166–188 (ATTY…PRLL). Residues 294 to 378 (TEVDDQELLS…IATAARNLGF (85 aa)) form the RCK C-terminal domain. The next 6 helical transmembrane spans lie at 388–406 (LVYL…LLQV), 411–433 (VPLG…WLYS), 446–465 (LRLL…GLAA), 480–502 (LFAK…GLLL), 509–531 (LPPV…LNAL), and 546–568 (VPFA…CAVA).

Belongs to the AAE transporter (TC 2.A.81) family.

It is found in the cell membrane. This is an uncharacterized protein from Bordetella parapertussis (strain 12822 / ATCC BAA-587 / NCTC 13253).